Consider the following 179-residue polypeptide: Large ribosomal subunit protein uL6 (179 aa).

Belongs to the universal ribosomal protein uL6 family. Part of the 50S ribosomal subunit.

Its function is as follows. This protein binds to the 23S rRNA, and is important in its secondary structure. It is located near the subunit interface in the base of the L7/L12 stalk, and near the tRNA binding site of the peptidyltransferase center. The chain is Large ribosomal subunit protein uL6 from Bifidobacterium adolescentis (strain ATCC 15703 / DSM 20083 / NCTC 11814 / E194a).